The following is a 273-amino-acid chain: Protein FAM216A (273 aa).

Residues 1 to 47 (MLGQLLPHTARGLGAAEMPGQGPGSDWTERSSSAEPPAVAGTEGGGG) are disordered.

This sequence belongs to the FAM216 family.

This is Protein FAM216A (FAM216A) from Homo sapiens (Human).